The following is a 732-amino-acid chain: Iron-sulfur clusters transporter ATM1, mitochondrial (732 aa).

The N-terminal 55 residues, 1-55, are a transit peptide targeting the mitochondrion; that stretch reads MGFGSCSRHALFTPAAFSGSFTTMTTSCFKRVYTAQIHGGDALGKRLPSVSSFSG. Residues 56–143 lie on the Mitochondrial matrix side of the membrane; it reads QLPRHGLHRQ…KNNPNVKFRV (88 aa). Positions 71 to 114 are disordered; it reads STSHRRQTSPPPSPRTTSQSPTVPSKASTTPPTSLNTSKPIATE. The segment covering 85–95 has biased composition (low complexity); the sequence is RTTSQSPTVPS. The span at 96–114 shows a compositional bias: polar residues; that stretch reads KASTTPPTSLNTSKPIATE. A helical membrane pass occupies residues 144-164; it reads IGALTLLVAGKVLNVQVPFFF. One can recognise an ABC transmembrane type-1 domain in the interval 144–432; the sequence is IGALTLLVAG…LGTVYRELRQ (289 aa). At 165–181 the chain is on the mitochondrial intermembrane side; the sequence is KTIVDSLNVPITESTTV. Residues 182 to 202 form a helical membrane-spanning segment; sequence WVLAGASIAGYGAARILTTLF. Over 203–262 the chain is Mitochondrial matrix; that stretch reads GELRNAVFASVAQNAIRKVARETFEHLLNMDMKFHLERQTGGLTRAIDRGTKGISFILSS. Residues 263-283 form a helical membrane-spanning segment; the sequence is IVFHVIPTALEISMVCGILSW. A topological domain (mitochondrial intermembrane) is located at residue K284. The helical transmembrane segment at 285-305 threads the bilayer; that stretch reads FGWDFAAVTAITMLLYTWFTI. Over 306–378 the chain is Mitochondrial matrix; the sequence is KTTAWRTTFR…SLAALNSGQN (73 aa). Residues 311–315 and 374–377 each bind glutathione; these read RTTFR and NSGQ. A helical transmembrane segment spans residues 379–399; the sequence is FIFSSALTMMMLLGAQGIVKG. The Mitochondrial intermembrane portion of the chain corresponds to 400 to 405; sequence TMTVGD. A helical membrane pass occupies residues 406–426; sequence LVLVNQLVFQLSLPLNFLGTV. G424 is a glutathione binding site. Residues 427–732 are Mitochondrial matrix-facing; the sequence is YRELRQSLID…LEVVDEKKKQ (306 aa). The ABC transporter domain maps to 466–702; it reads IEFRNVAFAY…PGGVYHRLWQ (237 aa). ATP-binding positions include Y475 and 499–506; that span reads GPSGCGKS. The interval 708 to 732 is disordered; sequence STQPTDEEIERQREELEVVDEKKKQ. Residues 717-732 are compositionally biased toward basic and acidic residues; it reads ERQREELEVVDEKKKQ.

It belongs to the ABC transporter superfamily. ABCB family. Heavy Metal importer (TC 3.A.1.210) subfamily. As to quaternary structure, homodimer.

The protein localises to the mitochondrion inner membrane. In terms of biological role, performs an essential function in the generation of cytoplasmic iron-sulfur proteins by mediating the ATP-dependent export of mitochondrial Fe/S cluster precursors synthesized by NFS1 and other mitochondrial proteins. Hydrolyzes ATP. Binds glutathione and may function by transporting a glutathione-conjugated iron-sulfur compound. Plays a role during copper stress, in a manner dependent on the copper metalloregulatory transcription factor CUF1. The chain is Iron-sulfur clusters transporter ATM1, mitochondrial from Cryptococcus neoformans var. grubii serotype A (strain H99 / ATCC 208821 / CBS 10515 / FGSC 9487) (Filobasidiella neoformans var. grubii).